Here is a 105-residue protein sequence, read N- to C-terminus: Large ribosomal subunit protein uL24 (105 aa).

This sequence belongs to the universal ribosomal protein uL24 family. As to quaternary structure, part of the 50S ribosomal subunit.

One of two assembly initiator proteins, it binds directly to the 5'-end of the 23S rRNA, where it nucleates assembly of the 50S subunit. In terms of biological role, one of the proteins that surrounds the polypeptide exit tunnel on the outside of the subunit. The chain is Large ribosomal subunit protein uL24 from Xylella fastidiosa (strain M23).